Reading from the N-terminus, the 250-residue chain is Probable transcriptional regulatory protein Paes_0496 (250 aa).

The protein belongs to the TACO1 family.

It is found in the cytoplasm. The chain is Probable transcriptional regulatory protein Paes_0496 from Prosthecochloris aestuarii (strain DSM 271 / SK 413).